The following is a 350-amino-acid chain: Glycerol-1-phosphate dehydrogenase [NAD(P)+] (350 aa).

Residues 97-101 and 119-122 each bind NAD(+); these read GSIID and TTAS. Asp-124 provides a ligand contact to substrate. Ser-128 is a binding site for NAD(+). Residue Asp-171 participates in substrate binding. Zn(2+) contacts are provided by Asp-171 and His-251. His-255 contacts substrate. His-267 contacts Zn(2+).

The protein belongs to the glycerol-1-phosphate dehydrogenase family. Zn(2+) is required as a cofactor.

The protein localises to the cytoplasm. The enzyme catalyses sn-glycerol 1-phosphate + NAD(+) = dihydroxyacetone phosphate + NADH + H(+). The catalysed reaction is sn-glycerol 1-phosphate + NADP(+) = dihydroxyacetone phosphate + NADPH + H(+). It participates in membrane lipid metabolism; glycerophospholipid metabolism. Its function is as follows. Catalyzes the NAD(P)H-dependent reduction of dihydroxyacetonephosphate (DHAP or glycerone phosphate) to glycerol 1-phosphate (G1P). The G1P thus generated is used as the glycerophosphate backbone of phospholipids in the cellular membranes of Archaea. The protein is Glycerol-1-phosphate dehydrogenase [NAD(P)+] of Thermococcus sibiricus (strain DSM 12597 / MM 739).